We begin with the raw amino-acid sequence, 944 residues long: UvrABC system protein A (944 aa).

The 242-residue stretch at 1-242 (MSKVDFLHIK…GKGIVKVENV (242 aa)) folds into the ABC transporter 1 domain. ATP is bound at residue 34–41 (GLSGSGKS). The C4-type; degenerate zinc finger occupies 256–283 (CPKGDFEMPKIETRLFSFNSPYGMCQNC). ABC transporter domains are found at residues 359 to 597 (EEID…KYLS) and 610 to 935 (SGSG…EKSY). 643 to 650 (GVSGSGKS) provides a ligand contact to ATP. A C4-type zinc finger spans residues 744-770 (CEKCSGDGSIKIEMFFLPNVYITCDHC).

Belongs to the ABC transporter superfamily. UvrA family. As to quaternary structure, forms a heterotetramer with UvrB during the search for lesions.

Its subcellular location is the cytoplasm. Functionally, the UvrABC repair system catalyzes the recognition and processing of DNA lesions. UvrA is an ATPase and a DNA-binding protein. A damage recognition complex composed of 2 UvrA and 2 UvrB subunits scans DNA for abnormalities. When the presence of a lesion has been verified by UvrB, the UvrA molecules dissociate. This chain is UvrABC system protein A, found in Mycoplasmopsis pulmonis (strain UAB CTIP) (Mycoplasma pulmonis).